The primary structure comprises 1220 residues: ATP-dependent helicase/deoxyribonuclease subunit B (1220 aa).

Residues 1–281 form the UvrD-like helicase ATP-binding domain; the sequence is MSMRFIVGRA…VFLTETHRFE (281 aa). 8-15 lines the ATP pocket; it reads GRAGTGKS. The 308-residue stretch at 283-590 folds into the UvrD-like helicase C-terminal domain; it reads AGLKHLERFY…LVGSLDRSRN (308 aa). Cysteine 788 provides a ligand contact to [4Fe-4S] cluster. The interval 989–1008 is disordered; the sequence is LAEGSKGSEGSEGSEDSEDS. [4Fe-4S] cluster contacts are provided by cysteine 1128, cysteine 1131, and cysteine 1137. The span at 1162–1171 shows a compositional bias: polar residues; the sequence is RVQSQDSEQY. Positions 1162–1220 are disordered; the sequence is RVQSQDSEQYPEQHPPTSVPGETSRRALQKDGGNSPRGQELIWLGEDEAGAGKEDDGHE. Residues 1211 to 1220 are compositionally biased toward basic and acidic residues; sequence GAGKEDDGHE.

The protein belongs to the helicase family. AddB/RexB type 1 subfamily. Heterodimer of AddA and AddB. Mg(2+) serves as cofactor. Requires [4Fe-4S] cluster as cofactor.

In terms of biological role, the heterodimer acts as both an ATP-dependent DNA helicase and an ATP-dependent, dual-direction single-stranded exonuclease. Recognizes the chi site generating a DNA molecule suitable for the initiation of homologous recombination. The AddB subunit has 5' -&gt; 3' nuclease activity but not helicase activity. The polypeptide is ATP-dependent helicase/deoxyribonuclease subunit B (Desulfitobacterium hafniense (strain Y51)).